The sequence spans 243 residues: Probable transcriptional regulatory protein BAPKO_0024/BafPKo_0025 (243 aa).

This sequence belongs to the TACO1 family.

Its subcellular location is the cytoplasm. This Borreliella afzelii (strain PKo) (Borrelia afzelii) protein is Probable transcriptional regulatory protein BAPKO_0024/BafPKo_0025.